The primary structure comprises 268 residues: Phosphatidylglycerol--prolipoprotein diacylglyceryl transferase (268 aa).

7 helical membrane-spanning segments follow: residues 27–47, 66–86, 104–124, 130–150, 181–201, 208–228, and 242–262; these read PALR…MWLL, LLFY…VLFY, GGMS…YITW, FFAV…AGRI, PSQL…LYWF, VGAV…IVET, and LMTM…YLIL. Arg149 contacts a 1,2-diacyl-sn-glycero-3-phospho-(1'-sn-glycerol).

This sequence belongs to the Lgt family.

Its subcellular location is the cell inner membrane. The catalysed reaction is L-cysteinyl-[prolipoprotein] + a 1,2-diacyl-sn-glycero-3-phospho-(1'-sn-glycerol) = an S-1,2-diacyl-sn-glyceryl-L-cysteinyl-[prolipoprotein] + sn-glycerol 1-phosphate + H(+). It participates in protein modification; lipoprotein biosynthesis (diacylglyceryl transfer). Its function is as follows. Catalyzes the transfer of the diacylglyceryl group from phosphatidylglycerol to the sulfhydryl group of the N-terminal cysteine of a prolipoprotein, the first step in the formation of mature lipoproteins. This chain is Phosphatidylglycerol--prolipoprotein diacylglyceryl transferase, found in Shewanella oneidensis (strain ATCC 700550 / JCM 31522 / CIP 106686 / LMG 19005 / NCIMB 14063 / MR-1).